We begin with the raw amino-acid sequence, 120 residues long: Flagellar protein FliT (120 aa).

Residues M1–N50 form a required for homodimerization region. Residues F59 to N97 are fliD binding.

The protein belongs to the FliT family. Homodimer. Interacts with FliD and FlhC.

It localises to the cytoplasm. It is found in the cytosol. Dual-function protein that regulates the transcription of class 2 flagellar operons and that also acts as an export chaperone for the filament-capping protein FliD. As a transcriptional regulator, acts as an anti-FlhDC factor; it directly binds FlhC, thus inhibiting the binding of the FlhC/FlhD complex to class 2 promoters, resulting in decreased expression of class 2 flagellar operons. As a chaperone, effects FliD transition to the membrane by preventing its premature polymerization, and by directing it to the export apparatus. The protein is Flagellar protein FliT of Cronobacter sakazakii (strain ATCC BAA-894) (Enterobacter sakazakii).